The primary structure comprises 288 residues: Keratin-associated protein 5-4 (288 aa).

9 repeat units span residues C49–P52, C55–P58, C61–P64, C201–P204, C220–P223, C239–P242, C249–P252, C268–P271, and C278–P281. A 9 X 4 AA repeats of C-C-X-P region spans residues C49–P281.

Belongs to the KRTAP type 5 family. Interacts with hair keratins. As to expression, restricted to hair root, not detected in any other tissues.

In terms of biological role, in the hair cortex, hair keratin intermediate filaments are embedded in an interfilamentous matrix, consisting of hair keratin-associated protein (KRTAP), which are essential for the formation of a rigid and resistant hair shaft through their extensive disulfide bond cross-linking with abundant cysteine residues of hair keratins. The matrix proteins include the high-sulfur and high-glycine-tyrosine keratins. In Homo sapiens (Human), this protein is Keratin-associated protein 5-4 (KRTAP5-4).